Consider the following 419-residue polypeptide: MSPLLLLLLCLLLGNLEPEEAKLIRVPLQRIHLGHRILNPLNGWEQLAELSRTSTSGGNPSFVPLSKFMNTQYFGTIGLGTPPQNFTVVFDTGSSNLWVPSTRCHFFSLACWFHHRFNPKASSSFRPNGTKFAIQYGTGRLSGILSQDNLTIGGIHDAFVTFGEALWEPSLIFALAHFDGILGLGFPTLAVGGVQPPLDAMVEQGLLEKPVFSFYLNRDSEGSDGGELVLGGSDPAHYVPPLTFIPVTIPAYWQVHMESVKVGTGLSLCAQGCSAILDTGTSLITGPSEEIRALNKAIGGYPFLNGQYFIQCSKTPTLPPVSFHLGGVWFNLTGQDYVIKILQSDVGLCLLGFQALDIPKPAGPLWILGDVFLGPYVAVFDRGDKNVGPRVGLARAQSRSTDRAERRTTQAQFFKRRPG.

The signal sequence occupies residues 1–16 (MSPLLLLLLCLLLGNL). In terms of domain architecture, Peptidase A1 spans 73 to 394 (YFGTIGLGTP…KNVGPRVGLA (322 aa)). Asn85 carries an N-linked (GlcNAc...) asparagine glycan. Residue Asp91 is part of the active site. The cysteines at positions 104 and 111 are disulfide-linked. N-linked (GlcNAc...) asparagine glycosylation is found at Asn128 and Asn149. An intrachain disulfide couples Cys269 to Cys273. Residue Asp278 is part of the active site. Cys312 and Cys349 form a disulfide bridge. The N-linked (GlcNAc...) asparagine glycan is linked to Asn331. The tract at residues 391 to 419 (VGLARAQSRSTDRAERRTTQAQFFKRRPG) is disordered.

It belongs to the peptidase A1 family. As to expression, expressed at the highest levels in the kidney, at a moderate level in the lung, and at low levels in the spleen and adipose tissue.

The protein resides in the secreted. Its function is as follows. May be involved in processing of pneumocyte surfactant precursors. This chain is Napsin-A (Napsa), found in Mus musculus (Mouse).